Reading from the N-terminus, the 352-residue chain is MPYSADLDIRVTDSSLRDGSHAKRHQFTVEHVRSIVGALDAAGVPVIEVTHGDGLGGSSFNYGFSHTPEQELIKAAVETAERARIAFLMLPGLGVQSDIREAADNGASICRIATHCTEADISVQHFGLARELGLETVGFLMMSHSQPPEVLAKQARIMADAGCQCVYVVDSAGALILNAVSDRVSALVAELGDDAQVGFHGHENLGLGVANSVLAVEAGALQIDGSTRRFGAGAGNTPVEAFAAVTEKLGIRTGIDTLKIIDAAEDVVRPIMDGDCQLDRLSLMMGYAGVYSSFLKHADSHARRYGVSGAEILIEAGRRKLVGGQEDQLIEIALGLADRGPAGSAVAEKKSA.

The 253-residue stretch at 9–261 (IRVTDSSLRD…RTGIDTLKII (253 aa)) folds into the Pyruvate carboxyltransferase domain. A substrate-binding site is contributed by 17-18 (RD). Asp-18 lines the Mn(2+) pocket. His-21 functions as the Proton acceptor in the catalytic mechanism. Positions 171 and 200 each coordinate substrate. Mn(2+) contacts are provided by His-200 and His-202. Position 291 (Tyr-291) interacts with substrate.

The protein belongs to the 4-hydroxy-2-oxovalerate aldolase family.

The enzyme catalyses (S)-4-hydroxy-2-oxopentanoate = acetaldehyde + pyruvate. The sequence is that of 4-hydroxy-2-oxovalerate aldolase 4 from Rhodococcus jostii (strain RHA1).